The sequence spans 339 residues: Anthranilate phosphoribosyltransferase (339 aa).

Residues Gly81, 84–85, Thr89, 91–94, 109–117, and Ser121 contribute to the 5-phospho-alpha-D-ribose 1-diphosphate site; these read GD, NVST, and KHGNRSVSS. Gly81 serves as a coordination point for anthranilate. A Mg(2+)-binding site is contributed by Ser93. Asn112 lines the anthranilate pocket. An anthranilate-binding site is contributed by Arg167. Positions 226 and 227 each coordinate Mg(2+).

It belongs to the anthranilate phosphoribosyltransferase family. Homodimer. Mg(2+) serves as cofactor.

The enzyme catalyses N-(5-phospho-beta-D-ribosyl)anthranilate + diphosphate = 5-phospho-alpha-D-ribose 1-diphosphate + anthranilate. It participates in amino-acid biosynthesis; L-tryptophan biosynthesis; L-tryptophan from chorismate: step 2/5. Catalyzes the transfer of the phosphoribosyl group of 5-phosphorylribose-1-pyrophosphate (PRPP) to anthranilate to yield N-(5'-phosphoribosyl)-anthranilate (PRA). The chain is Anthranilate phosphoribosyltransferase from Persephonella marina (strain DSM 14350 / EX-H1).